Here is a 295-residue protein sequence, read N- to C-terminus: Bifunctional protein FolD (295 aa).

Residues 166 to 168 (GRS), serine 195, and isoleucine 236 each bind NADP(+).

It belongs to the tetrahydrofolate dehydrogenase/cyclohydrolase family. As to quaternary structure, homodimer.

It carries out the reaction (6R)-5,10-methylene-5,6,7,8-tetrahydrofolate + NADP(+) = (6R)-5,10-methenyltetrahydrofolate + NADPH. It catalyses the reaction (6R)-5,10-methenyltetrahydrofolate + H2O = (6R)-10-formyltetrahydrofolate + H(+). It participates in one-carbon metabolism; tetrahydrofolate interconversion. In terms of biological role, catalyzes the oxidation of 5,10-methylenetetrahydrofolate to 5,10-methenyltetrahydrofolate and then the hydrolysis of 5,10-methenyltetrahydrofolate to 10-formyltetrahydrofolate. This chain is Bifunctional protein FolD, found in Prosthecochloris aestuarii (strain DSM 271 / SK 413).